A 1198-amino-acid chain; its full sequence is Sterol 3-beta-glucosyltransferase (1198 aa).

A compositionally biased stretch (polar residues) spans 1-11; the sequence is MPITQIISASD. Disordered stretches follow at residues 1-89 and 124-162; these read MPIT…DNAD and SQVD…PEVP. Positions 35-51 are enriched in basic residues; that stretch reads RHHRLSRSLSKFKRWRG. The span at 52-67 shows a compositional bias: low complexity; that stretch reads RSNSSLSMGSSEQQEL. Phosphoserine is present on S76. Residues 146-162 show a composition bias toward basic and acidic residues; sequence VKSKKENLKTKSHPEVP. The GRAM 1 domain occupies 187 to 236; it reads AKLRQRFCLDEQEPFLNDFPAWLLKDVLVQGHIFITTKHFLFFAYLPKNP. The 99-residue stretch at 238 to 336 folds into the PH domain; that stretch reads SVKMSGNLNI…WVNALKKEQF (99 aa). Residues 427–465 are disordered; the sequence is KSSFGKETPATAEQKNNGEDSKYLNVPTSAVPSSENGKK. A compositionally biased stretch (polar residues) spans 452–461; it reads VPTSAVPSSE. A GRAM 2 domain is found at 570 to 636; the sequence is ERFRYHFKFN…VDVETCYKEK (67 aa). Position 693 is a phosphoserine (S693). The UDP-alpha-D-glucose site is built by S749, R750, D752, N1025, N1053, V1054, H1056, H1069, S1072, G1073, T1074, D1093, and Q1094.

This sequence belongs to the glycosyltransferase 28 family.

It is found in the cytoplasm. The protein localises to the membrane. It carries out the reaction a sterol + UDP-alpha-D-glucose = a sterol 3-beta-D-glucoside + UDP + H(+). It catalyses the reaction ergosterol + UDP-alpha-D-glucose = ergosteryl 3-beta-D-glucoside + UDP + H(+). In terms of biological role, sterol glycosyltransferase responsible for the glycosylation of ergosterol to form ergosterol-glucoside. Also shows activity in vitro on other sterols such as cholesterol, beta-sitosterol, stigmasterol and tomatidine. In contrasts to what is observed in Pichia pastoris and Aspergillus oryzae, is not involved in cytoplasm to vacuole transport (Cvt), pexophagy or nonselective autophagy in Saccharomyces cerevisiae. This is Sterol 3-beta-glucosyltransferase from Saccharomyces cerevisiae (strain YJM789) (Baker's yeast).